A 405-amino-acid polypeptide reads, in one-letter code: Serine--glyoxylate aminotransferase (405 aa).

Position 196 is an N6-(pyridoxal phosphate)lysine (Lys-196).

It belongs to the class-V pyridoxal-phosphate-dependent aminotransferase family. Pyridoxal 5'-phosphate serves as cofactor.

The enzyme catalyses glyoxylate + L-serine = 3-hydroxypyruvate + glycine. Its pathway is one-carbon metabolism; formaldehyde assimilation via serine pathway. The sequence is that of Serine--glyoxylate aminotransferase (sgaA) from Hyphomicrobium methylovorum.